The sequence spans 339 residues: Ribosomal RNA small subunit methyltransferase H (339 aa).

S-adenosyl-L-methionine-binding positions include 36-38 (GGY), D55, F82, D103, and Q110. The disordered stretch occupies residues 286–319 (GPIGPSEAEATANPRARSAKLRAGERTDAPIPEP).

It belongs to the methyltransferase superfamily. RsmH family.

The protein localises to the cytoplasm. It carries out the reaction cytidine(1402) in 16S rRNA + S-adenosyl-L-methionine = N(4)-methylcytidine(1402) in 16S rRNA + S-adenosyl-L-homocysteine + H(+). In terms of biological role, specifically methylates the N4 position of cytidine in position 1402 (C1402) of 16S rRNA. This Methylobacterium nodulans (strain LMG 21967 / CNCM I-2342 / ORS 2060) protein is Ribosomal RNA small subunit methyltransferase H.